The primary structure comprises 306 residues: Protein LOT5 (306 aa).

Belongs to the LOT5 family.

The protein localises to the cytoplasm. It localises to the nucleus. The sequence is that of Protein LOT5 (LOT5) from Saccharomyces cerevisiae (strain ATCC 204508 / S288c) (Baker's yeast).